The chain runs to 65 residues: Hirudin-2B (65 aa).

Residues 1–3 (ITY) form an interaction with thrombin active site region. 3 disulfides stabilise this stretch: cysteine 6–cysteine 14, cysteine 16–cysteine 28, and cysteine 22–cysteine 39. The tract at residues 39–65 (CVTGEGTPKPQSHNDGDFEEIPEEYLQ) is disordered. Threonine 45 carries O-linked (GalNAc...) threonine glycosylation. The interaction with fibrinogen-binding exosite of thrombin stretch occupies residues 55 to 65 (DFEEIPEEYLQ). Acidic residues predominate over residues 55-65 (DFEEIPEEYLQ). At tyrosine 63 the chain carries Sulfotyrosine.

It belongs to the protease inhibitor I14 (hirudin) family.

The protein resides in the secreted. Hirudin is a potent thrombin-specific protease inhibitor. It forms a stable non-covalent complex with alpha-thrombin, thereby abolishing its ability to cleave fibrinogen. This Hirudo medicinalis (Medicinal leech) protein is Hirudin-2B.